The following is a 255-amino-acid chain: F-box/SPRY domain-containing protein 1 (255 aa).

Residues 3–51 (DPVAALCNYNVLEVIFSYLELEDLSHCSQVCKSWYHFLNDENSDVWRWH) enclose the F-box domain. In terms of domain architecture, B30.2/SPRY spans 61 to 253 (LKSDLLSSVS…VSMVYLGTPL (193 aa)).

This sequence belongs to the FBXO45/Fsn family. Component of an E3 ubiquitin ligase complex composed of hiw and Fsn.

It localises to the synapse. It participates in protein modification; protein ubiquitination. Functionally, required in the presynaptic motoneuron to down-regulate the levels of wnd and restrain synaptic terminal growth at the neuromuscular junction (NMJ). The sequence is that of F-box/SPRY domain-containing protein 1 from Drosophila erecta (Fruit fly).